A 231-amino-acid chain; its full sequence is tRNA (guanine-N(1)-)-methyltransferase (231 aa).

S-adenosyl-L-methionine is bound by residues G114 and 134–139; that span reads IGDYVL.

Belongs to the RNA methyltransferase TrmD family. In terms of assembly, homodimer.

The protein resides in the cytoplasm. The enzyme catalyses guanosine(37) in tRNA + S-adenosyl-L-methionine = N(1)-methylguanosine(37) in tRNA + S-adenosyl-L-homocysteine + H(+). Functionally, specifically methylates guanosine-37 in various tRNAs. This chain is tRNA (guanine-N(1)-)-methyltransferase, found in Clostridioides difficile (strain 630) (Peptoclostridium difficile).